We begin with the raw amino-acid sequence, 136 residues long: Large ribosomal subunit protein uL16c (136 aa).

Over residues 1 to 17 the composition is skewed to basic residues; that stretch reads MLSPKRVKFRKQHRGRM. Residues 1–25 are disordered; that stretch reads MLSPKRVKFRKQHRGRMKGISTRGN.

The protein belongs to the universal ribosomal protein uL16 family. As to quaternary structure, part of the 50S ribosomal subunit.

Its subcellular location is the plastid. It localises to the chloroplast. This is Large ribosomal subunit protein uL16c from Anthoceros angustus (Hornwort).